A 523-amino-acid chain; its full sequence is Sodium-dependent lysophosphatidylcholine symporter 1-B (523 aa).

The Cytoplasmic segment spans residues 1–34; that stretch reads MAKGEGAEQYTNTSLLQKPSPDEVKLAKHETKSR. The helical transmembrane segment at 35–64 threads the bilayer; that stretch reads LSVCSKLCYAIGGAPYQITGCAIGFFLQIY. Over 65 to 75 the chain is Extracellular; it reads LLDVALLDPFY. Residues 76-96 traverse the membrane as a helical segment; that stretch reads ASIILFVGRAWDAVTDPTVGF. Residues 97–108 are Cytoplasmic-facing; sequence LVSRTPWTRFGR. A helical transmembrane segment spans residues 109–128; sequence MMPWIVLSTPFAVLCYFLIW. Residues 129-138 are Extracellular-facing; the sequence is YVPSVDQGKV. The helical transmembrane segment at 139-163 threads the bilayer; the sequence is VWYLIFYCCFQTLQTCFHVPYSALT. Residues 164 to 170 lie on the Cytoplasmic side of the membrane; it reads MFISTEQ. Residues 171–202 traverse the membrane as a helical segment; it reads KERDSATAYRMTVEVLGTLIGTAIQGQIVGMA. Residues 203 to 226 lie on the Extracellular side of the membrane; the sequence is NAPCISTEIDLNSTGLEVAPDVNI. Cys206 and Cys457 form a disulfide bridge. N-linked (GlcNAc...) asparagine glycosylation is found at Asn214 and Asn225. The helical transmembrane segment at 227–260 threads the bilayer; it reads TDPHVSLQDLRNAYMIASGVICAIYVVCAVVLFL. At 261-290 the chain is on the cytoplasmic side; that stretch reads GVKEQKDTCRVRTEPMSFFQGICMVMGHGP. The chain crosses the membrane as a helical span at residues 291 to 317; sequence YAKLVMGFLFTSLAFMLLEGNFALFCI. Over 318–328 the chain is Extracellular; it reads YNLGFRNDFQN. The chain crosses the membrane as a helical span at residues 329-347; it reads VLLVIMLSATLAIPFWQWF. The Cytoplasmic segment spans residues 348-351; that stretch reads LTKF. Residues 352 to 373 form a helical membrane-spanning segment; sequence GKKTAVYIGTTSVVPFLISVVL. The Extracellular segment spans residues 374–376; it reads VPS. The chain crosses the membrane as a helical span at residues 377–413; the sequence is SLAVTYIASFAAGVSVAAAFLLPWSMLPDVVDDFKVQ. Residues 414 to 423 lie on the Cytoplasmic side of the membrane; the sequence is NPESQGHEAI. Residues 424-450 traverse the membrane as a helical segment; the sequence is FYSFYVFFTKFASGVSLGVSTLSLDFA. At 451-462 the chain is on the extracellular side; the sequence is GYVTRGCTQPGE. A helical transmembrane segment spans residues 463–486; the sequence is VKLTLKILVSAAPIVLIIIGLLIF. The Cytoplasmic segment spans residues 487 to 523; that stretch reads ISYPINEEKRQGNRKLLNEQRENEMDSETDSTELNVV. Positions 504–523 are disordered; it reads NEQRENEMDSETDSTELNVV.

It belongs to the major facilitator superfamily. Expressed in the developing nervous system.

It localises to the cell membrane. Its subcellular location is the endoplasmic reticulum membrane. The enzyme catalyses a 1-acyl-sn-glycero-3-phosphocholine(in) + Na(+)(in) = a 1-acyl-sn-glycero-3-phosphocholine(out) + Na(+)(out). The catalysed reaction is 1-(4Z,7Z,10Z,13Z,16Z,19Z-docosahexaenoyl)-sn-glycero-3-phosphocholine(in) + Na(+)(in) = 1-(4Z,7Z,10Z,13Z,16Z,19Z-docosahexaenoyl)-sn-glycero-3-phosphocholine(out) + Na(+)(out). It catalyses the reaction 1-(9Z-octadecenoyl)-sn-glycero-3-phosphocholine(in) + Na(+)(in) = 1-(9Z-octadecenoyl)-sn-glycero-3-phosphocholine(out) + Na(+)(out). It carries out the reaction 1-hexadecanoyl-sn-glycero-3-phosphocholine(in) + Na(+)(in) = 1-hexadecanoyl-sn-glycero-3-phosphocholine(out) + Na(+)(out). The enzyme catalyses a 1-acyl-sn-glycero-3-phosphoethanolamine(in) + Na(+)(in) = a 1-acyl-sn-glycero-3-phosphoethanolamine(out) + Na(+)(out). Its function is as follows. Sodium-dependent lysophosphatidylcholine (LPC) symporter, which plays an essential role for blood-brain barrier formation and function. Specifically expressed in endothelium of the blood-brain barrier of micro-vessels and transports LPC into the brain. Transport of LPC is essential because it constitutes the major mechanism by which docosahexaenoic acid (DHA), an omega-3 fatty acid that is essential for normal brain growth and cognitive function, enters the brain. Transports LPC carrying long-chain fatty acids such LPC oleate and LPC palmitate with a minimum acyl chain length of 14 carbons. Does not transport docosahexaenoic acid in unesterified fatty acid. The sequence is that of Sodium-dependent lysophosphatidylcholine symporter 1-B (mfsd2ab) from Danio rerio (Zebrafish).